Here is a 205-residue protein sequence, read N- to C-terminus: Imidazoleglycerol-phosphate dehydratase (205 aa).

It belongs to the imidazoleglycerol-phosphate dehydratase family.

It catalyses the reaction D-erythro-1-(imidazol-4-yl)glycerol 3-phosphate = 3-(imidazol-4-yl)-2-oxopropyl phosphate + H2O. It functions in the pathway amino-acid biosynthesis; L-histidine biosynthesis; L-histidine from 5-phospho-alpha-D-ribose 1-diphosphate: step 6/9. The protein is Imidazoleglycerol-phosphate dehydratase (HIS3) of Phaffia rhodozyma (Yeast).